The chain runs to 563 residues: Arginine--tRNA ligase (563 aa).

The 'HIGH' region motif lies at 120-130 (PNIAKPFHVGH).

The protein belongs to the class-I aminoacyl-tRNA synthetase family. In terms of assembly, monomer.

It localises to the cytoplasm. The catalysed reaction is tRNA(Arg) + L-arginine + ATP = L-arginyl-tRNA(Arg) + AMP + diphosphate. In Clostridium botulinum (strain Alaska E43 / Type E3), this protein is Arginine--tRNA ligase.